A 248-amino-acid polypeptide reads, in one-letter code: Granulin (248 aa).

The protein belongs to the polyhedrin family.

Functionally, component of the virus occlusion bodies, which are large proteinaceous structures, that protect the virus from the outside environment for extended periods until they are ingested by insect larvae. The sequence is that of Granulin from Zygaenidae (burnets).